The primary structure comprises 252 residues: Small ribosomal subunit protein eS4 (252 aa).

In terms of domain architecture, S4 RNA-binding spans 43 to 106 (LPLLILVRDM…NKYYRVIPVP (64 aa)).

The protein belongs to the eukaryotic ribosomal protein eS4 family.

The protein is Small ribosomal subunit protein eS4 of Desulfurococcus amylolyticus (strain DSM 18924 / JCM 16383 / VKM B-2413 / 1221n) (Desulfurococcus kamchatkensis).